Here is a 131-residue protein sequence, read N- to C-terminus: Phosphoribosyl-AMP cyclohydrolase (131 aa).

Mg(2+) is bound at residue Asp-80. Residue Cys-81 participates in Zn(2+) binding. Positions 82 and 84 each coordinate Mg(2+). The Zn(2+) site is built by Cys-98 and Cys-105.

This sequence belongs to the PRA-CH family. Homodimer. Mg(2+) is required as a cofactor. Zn(2+) serves as cofactor.

Its subcellular location is the cytoplasm. The catalysed reaction is 1-(5-phospho-beta-D-ribosyl)-5'-AMP + H2O = 1-(5-phospho-beta-D-ribosyl)-5-[(5-phospho-beta-D-ribosylamino)methylideneamino]imidazole-4-carboxamide. Its pathway is amino-acid biosynthesis; L-histidine biosynthesis; L-histidine from 5-phospho-alpha-D-ribose 1-diphosphate: step 3/9. Its function is as follows. Catalyzes the hydrolysis of the adenine ring of phosphoribosyl-AMP. This Azoarcus sp. (strain BH72) protein is Phosphoribosyl-AMP cyclohydrolase.